The primary structure comprises 1001 residues: uncharacterized protein (1001 aa).

Over residues 939-948 (KVVDNKRDAS) the composition is skewed to basic and acidic residues. The disordered stretch occupies residues 939 to 1001 (KVVDNKRDAS…HTSKRVQKKN (63 aa)). Residues serine 948 and serine 950 each carry the phosphoserine modification.

This is an uncharacterized protein from Schizosaccharomyces pombe (strain 972 / ATCC 24843) (Fission yeast).